Here is a 297-residue protein sequence, read N- to C-terminus: Probable esterase afoC (297 aa).

Ser-136 (charge relay system) is an active-site residue. Residues 204–217 (ASSSASASVSGSES) show a composition bias toward low complexity. A disordered region spans residues 204–226 (ASSSASASVSGSESAGEEEEDGH). Catalysis depends on charge relay system residues Asp-240 and His-267.

This sequence belongs to the LovG family.

Functionally, probable esterase; part of the gene cluster that mediates the biosynthesis of asperfuranone, a probable antitumor agent. The polyketide synthase afoG is responsible for producing the 3,5-dimethyloctadienone moiety from acetyl-CoA, three malonyl-CoA, and two S-adenosyl methionines (SAM). The 3,5-dimethyloctadienone moiety is then loaded onto the SAT domain of afoE and extended with four malonyl-CoA and one SAM, which leads to the formation of 2,4-dihydroxy-6-(5,7-dimethyl-2-oxo-trans-3-trans-5-nonadienyl)-3-methylbenzaldehyde (compound 2) after reductive release and aldol condensation. AfoD is the next enzyme in the biosynthesis sequence and hydroxylates the side chain at the benzylic position of compound 2. After benzylic hydroxylation, a furan ring is formed after five-member ring hemiacetal formation and water elimination. AfoF and afoC are proposed to oxidize the R-diketone proton and to reduce the unconjugated carbonyl group, respectively, to generate asperfuranone. Since no intermediates could be isolated from afoF and afoC deletants, the sequence of these two enzymes is not fully understood. Moreover, since afoC deletant still produces a small amount of asperfuranone, other endogenous oxidoreductases might catalyze the same reaction with much less efficiency. The chain is Probable esterase afoC from Emericella nidulans (strain FGSC A4 / ATCC 38163 / CBS 112.46 / NRRL 194 / M139) (Aspergillus nidulans).